We begin with the raw amino-acid sequence, 483 residues long: NADH-quinone oxidoreductase subunit N (483 aa).

14 helical membrane-spanning segments follow: residues 8 to 28, 45 to 65, 78 to 98, 106 to 126, 131 to 151, 166 to 186, 206 to 226, 241 to 261, 275 to 295, 303 to 323, 330 to 350, 373 to 393, 399 to 419, and 452 to 472; these read INLA…GLLL, IAAG…GATQ, FAAF…VVSW, LGNG…MFMI, FLVL…LAAY, FVLG…IYGV, MLGI…KIAA, PTSV…AALF, WGPI…LAGL, LLAY…AVGN, VLVY…LILV, LALL…LAGF, IFMA…VLFS, and AIVG…GSLM.

This sequence belongs to the complex I subunit 2 family. NDH-1 is composed of 14 different subunits. Subunits NuoA, H, J, K, L, M, N constitute the membrane sector of the complex.

The protein resides in the cell inner membrane. It carries out the reaction a quinone + NADH + 5 H(+)(in) = a quinol + NAD(+) + 4 H(+)(out). In terms of biological role, NDH-1 shuttles electrons from NADH, via FMN and iron-sulfur (Fe-S) centers, to quinones in the respiratory chain. The immediate electron acceptor for the enzyme in this species is believed to be ubiquinone. Couples the redox reaction to proton translocation (for every two electrons transferred, four hydrogen ions are translocated across the cytoplasmic membrane), and thus conserves the redox energy in a proton gradient. The protein is NADH-quinone oxidoreductase subunit N of Magnetococcus marinus (strain ATCC BAA-1437 / JCM 17883 / MC-1).